The primary structure comprises 529 residues: CTP synthase (529 aa).

The tract at residues 1–270 is amidoligase domain; sequence MKYIVVTGGV…ADVVCSYLSL (270 aa). S12 lines the CTP pocket. A UTP-binding site is contributed by S12. Residues 13 to 18 and D70 contribute to the ATP site; that span reads GLGKGI. Mg(2+) is bound by residues D70 and E145. CTP is bound by residues 152 to 154, 191 to 196, and K227; these read DIE and KTKPTQ. Residues 191-196 and K227 each bind UTP; that span reads KTKPTQ. ATP is bound at residue 243 to 245; the sequence is KDA. The Glutamine amidotransferase type-1 domain maps to 293-525; it reads VAIVSKYGIE…VEACKKNKSS (233 aa). G349 contacts L-glutamine. Catalysis depends on C376, which acts as the Nucleophile; for glutamine hydrolysis. L-glutamine contacts are provided by residues 377 to 380, E400, and R455; that span reads LGFQ. Catalysis depends on residues H498 and E500.

This sequence belongs to the CTP synthase family. In terms of assembly, homotetramer.

It carries out the reaction UTP + L-glutamine + ATP + H2O = CTP + L-glutamate + ADP + phosphate + 2 H(+). It catalyses the reaction L-glutamine + H2O = L-glutamate + NH4(+). The catalysed reaction is UTP + NH4(+) + ATP = CTP + ADP + phosphate + 2 H(+). It participates in pyrimidine metabolism; CTP biosynthesis via de novo pathway; CTP from UDP: step 2/2. Allosterically activated by GTP, when glutamine is the substrate; GTP has no effect on the reaction when ammonia is the substrate. The allosteric effector GTP functions by stabilizing the protein conformation that binds the tetrahedral intermediate(s) formed during glutamine hydrolysis. Inhibited by the product CTP, via allosteric rather than competitive inhibition. Functionally, catalyzes the ATP-dependent amination of UTP to CTP with either L-glutamine or ammonia as the source of nitrogen. Regulates intracellular CTP levels through interactions with the four ribonucleotide triphosphates. This is CTP synthase from Methanoculleus marisnigri (strain ATCC 35101 / DSM 1498 / JR1).